The chain runs to 195 residues: N-(5'-phosphoribosyl)anthranilate isomerase (195 aa).

It belongs to the TrpF family.

It carries out the reaction N-(5-phospho-beta-D-ribosyl)anthranilate = 1-(2-carboxyphenylamino)-1-deoxy-D-ribulose 5-phosphate. The protein operates within amino-acid biosynthesis; L-tryptophan biosynthesis; L-tryptophan from chorismate: step 3/5. The sequence is that of N-(5'-phosphoribosyl)anthranilate isomerase from Methanoregula boonei (strain DSM 21154 / JCM 14090 / 6A8).